The sequence spans 210 residues: ATP-dependent Clp protease proteolytic subunit (210 aa).

The Nucleophile role is filled by Ser-106. Residue His-131 is part of the active site.

This sequence belongs to the peptidase S14 family. As to quaternary structure, fourteen ClpP subunits assemble into 2 heptameric rings which stack back to back to give a disk-like structure with a central cavity, resembling the structure of eukaryotic proteasomes.

The protein localises to the cytoplasm. The enzyme catalyses Hydrolysis of proteins to small peptides in the presence of ATP and magnesium. alpha-casein is the usual test substrate. In the absence of ATP, only oligopeptides shorter than five residues are hydrolyzed (such as succinyl-Leu-Tyr-|-NHMec, and Leu-Tyr-Leu-|-Tyr-Trp, in which cleavage of the -Tyr-|-Leu- and -Tyr-|-Trp bonds also occurs).. Functionally, cleaves peptides in various proteins in a process that requires ATP hydrolysis. Has a chymotrypsin-like activity. Plays a major role in the degradation of misfolded proteins. In Bradyrhizobium sp. (strain BTAi1 / ATCC BAA-1182), this protein is ATP-dependent Clp protease proteolytic subunit.